Here is a 670-residue protein sequence, read N- to C-terminus: DNA ligase (670 aa).

NAD(+)-binding positions include 35-39 (DSVYD), 84-85 (SL), and glutamate 116. Catalysis depends on lysine 118, which acts as the N6-AMP-lysine intermediate. Residues arginine 139, glutamate 176, lysine 293, and lysine 317 each coordinate NAD(+). Zn(2+)-binding residues include cysteine 411, cysteine 414, cysteine 429, and cysteine 435. A BRCT domain is found at 592–670 (VVKSEIAGKT…EEAFLKLLKS (79 aa)).

This sequence belongs to the NAD-dependent DNA ligase family. LigA subfamily. Mg(2+) is required as a cofactor. Requires Mn(2+) as cofactor.

It catalyses the reaction NAD(+) + (deoxyribonucleotide)n-3'-hydroxyl + 5'-phospho-(deoxyribonucleotide)m = (deoxyribonucleotide)n+m + AMP + beta-nicotinamide D-nucleotide.. DNA ligase that catalyzes the formation of phosphodiester linkages between 5'-phosphoryl and 3'-hydroxyl groups in double-stranded DNA using NAD as a coenzyme and as the energy source for the reaction. It is essential for DNA replication and repair of damaged DNA. In Coxiella burnetii (strain RSA 331 / Henzerling II), this protein is DNA ligase.